The primary structure comprises 122 residues: Large ribosomal subunit protein uL14 (122 aa).

The protein belongs to the universal ribosomal protein uL14 family. As to quaternary structure, part of the 50S ribosomal subunit. Forms a cluster with proteins L3 and L19. In the 70S ribosome, L14 and L19 interact and together make contacts with the 16S rRNA in bridges B5 and B8.

In terms of biological role, binds to 23S rRNA. Forms part of two intersubunit bridges in the 70S ribosome. This Acidothermus cellulolyticus (strain ATCC 43068 / DSM 8971 / 11B) protein is Large ribosomal subunit protein uL14.